A 223-amino-acid chain; its full sequence is Deoxyribose-phosphate aldolase (223 aa).

Aspartate 91 (proton donor/acceptor) is an active-site residue. The active-site Schiff-base intermediate with acetaldehyde is the lysine 154. The active-site Proton donor/acceptor is the lysine 183.

It belongs to the DeoC/FbaB aldolase family. DeoC type 1 subfamily.

It is found in the cytoplasm. It catalyses the reaction 2-deoxy-D-ribose 5-phosphate = D-glyceraldehyde 3-phosphate + acetaldehyde. It functions in the pathway carbohydrate degradation; 2-deoxy-D-ribose 1-phosphate degradation; D-glyceraldehyde 3-phosphate and acetaldehyde from 2-deoxy-alpha-D-ribose 1-phosphate: step 2/2. Catalyzes a reversible aldol reaction between acetaldehyde and D-glyceraldehyde 3-phosphate to generate 2-deoxy-D-ribose 5-phosphate. The sequence is that of Deoxyribose-phosphate aldolase from Geobacillus thermodenitrificans (strain NG80-2).